A 142-amino-acid chain; its full sequence is Large ribosomal subunit protein uL13 (142 aa).

The protein belongs to the universal ribosomal protein uL13 family. In terms of assembly, part of the 50S ribosomal subunit.

Functionally, this protein is one of the early assembly proteins of the 50S ribosomal subunit, although it is not seen to bind rRNA by itself. It is important during the early stages of 50S assembly. This is Large ribosomal subunit protein uL13 from Alcanivorax borkumensis (strain ATCC 700651 / DSM 11573 / NCIMB 13689 / SK2).